A 130-amino-acid polypeptide reads, in one-letter code: Sirohydrochlorin cobaltochelatase (130 aa).

Catalysis depends on His-12, which acts as the Proton acceptor. His-12 lines the Co(2+) pocket. Ni(2+) is bound at residue His-12. Substrate contacts are provided by residues Glu-48 and 73–78; that span reads LASGVH. His-78 serves as a coordination point for Co(2+). Residue His-78 participates in Ni(2+) binding.

Belongs to the CbiX family. CbiXS subfamily. In terms of assembly, homotetramer; dimer of dimers.

The catalysed reaction is Co-sirohydrochlorin + 2 H(+) = sirohydrochlorin + Co(2+). It carries out the reaction Ni-sirohydrochlorin + 2 H(+) = sirohydrochlorin + Ni(2+). The protein operates within cofactor biosynthesis; adenosylcobalamin biosynthesis; cob(II)yrinate a,c-diamide from sirohydrochlorin (anaerobic route): step 1/10. Its function is as follows. Catalyzes the insertion of Co(2+) into sirohydrochlorin as part of the anaerobic pathway to cobalamin biosynthesis. Involved in the biosynthesis of the unique nickel-containing tetrapyrrole coenzyme F430, the prosthetic group of methyl-coenzyme M reductase (MCR), which plays a key role in methanogenesis and anaerobic methane oxidation. Catalyzes the insertion of Ni(2+) into sirohydrochlorin to yield Ni-sirohydrochlorin. The chain is Sirohydrochlorin cobaltochelatase from Methanosarcina barkeri (strain Fusaro / DSM 804).